A 524-amino-acid polypeptide reads, in one-letter code: Germ cell-less protein-like 1 (524 aa).

The interval 1–37 (MGALSSRVLRPAGRTEQPEPTPGAGGAARRSDAGEDA) is disordered. Positions 47-53 (GRKRKRS) match the Nuclear localization signal motif. A disordered region spans residues 63–83 (DSETDDDEDEGDEQQRLLNTP). A Phosphoserine modification is found at Ser-64. Acidic residues predominate over residues 65–74 (ETDDDEDEGD). At Thr-66 the chain carries Phosphothreonine. The Nuclear localization signal motif lies at 83-89 (PRRKKLK). In terms of domain architecture, BTB spans 106 to 176 (SDIKICALGE…LYRDDVLIKP (71 aa)).

In terms of assembly, interacts with TMPO-Beta, TSG101 and TFDP2. Interacts with EMD. Ubiquitously expressed at low levels throughout development and in adult tissues.

It is found in the nucleus matrix. Its function is as follows. Possible function in spermatogenesis. Enhances the degradation of MDM2 and increases the amount of p53 probably by modulating the nucleocytoplasmic transport. The polypeptide is Germ cell-less protein-like 1 (Gmcl1) (Mus musculus (Mouse)).